The sequence spans 377 residues: ATP phosphoribosyltransferase regulatory subunit (377 aa).

It belongs to the class-II aminoacyl-tRNA synthetase family. HisZ subfamily. In terms of assembly, heteromultimer composed of HisG and HisZ subunits.

The protein localises to the cytoplasm. It functions in the pathway amino-acid biosynthesis; L-histidine biosynthesis; L-histidine from 5-phospho-alpha-D-ribose 1-diphosphate: step 1/9. Functionally, required for the first step of histidine biosynthesis. May allow the feedback regulation of ATP phosphoribosyltransferase activity by histidine. This is ATP phosphoribosyltransferase regulatory subunit from Sinorhizobium medicae (strain WSM419) (Ensifer medicae).